The sequence spans 457 residues: MMSYEPAEPVPVEEQPILEKLIGIRQRLAVLKRDRTRFIEKNEVFHLKDELVEQMNLLDSRRSTNSTRTIVDSQLEDCLHLLSLFYLAIGRNNDLPAFFVQLGTVRRLLEYNLEGACYTQNDLKPLKERLERIRAAIVEGSKKEDASPVVVKYLNNKLAVCDRNYSEAQHNISKISPELIGIQTRLVSIHRQIDGFAVRPTSDPGFIDRTMEQLKEIEEMKDSNGMFCDADHVPLQGQELCNGILEECFSFLEDAKTKEGLSDEMKSSPKLQQIYHRLDELLNKLKHLTLTHRWTLRETDLYVYRASLAEIDSMRIDGQFLDEQGNAPAGQRILLYLLRRCYAYIYQLLSSSEPVSEELMAVHNQLRTVKRCLLEVQRSGGICSERDLYPYQMKLASLENLRVNGKFLASDHSVPEGQELVNSLLTQCHQLIEELRDEKHQHDIEEREGSENTDGNL.

Coiled coils occupy residues 119–174 and 418–448; these read TQND…NISK and QELVNSLLTQCHQLIEELRDEKHQHDIEERE.

The protein belongs to the CUB1 family.

The protein localises to the cytoplasm. The protein resides in the nucleus. Its function is as follows. Involved in bleomycin tolerance with links to DNA repair and/or proteasome function. The polypeptide is CUB1 family protein C30C2.08 (Schizosaccharomyces pombe (strain 972 / ATCC 24843) (Fission yeast)).